Consider the following 388-residue polypeptide: Probable peptidoglycan glycosyltransferase FtsW (388 aa).

The Cytoplasmic segment spans residues 1–19 (MSAAAPKPRPAHRFHIDQT). The helical transmembrane segment at 20–40 (LLSVCLCLLGIGFVMVASSSM) threads the bilayer. Residues 41 to 57 (HLGVKMADDVSYYPFKQ) are Periplasmic-facing. Residues 58–78 (LVHIILGLMFAAAILAIPMKY) form a helical membrane-spanning segment. Topologically, residues 79–85 (WQKIGQP) are cytoplasmic. A helical membrane pass occupies residues 86–106 (LFIVGLVLLLVVLIPGVGVKV). Residues 107–117 (NGSTRWLSLLG) lie on the Periplasmic side of the membrane. The helical transmembrane segment at 118–137 (LRIQVSEVMKFISVVYMAGY) threads the bilayer. At 138–147 (ITRHSDHVRH) the chain is on the cytoplasmic side. Residues 148 to 168 (SIFGLLRPLMLLSVASILLLL) form a helical membrane-spanning segment. Residues 169–170 (EP) lie on the Periplasmic side of the membrane. A helical transmembrane segment spans residues 171–191 (DFGSAVVILIIAMGMMFLGGA). Position 192 (arginine 192) is a topological domain, cytoplasmic. Residues 193–213 (LSPFVALVALISSAGAILASS) form a helical membrane-spanning segment. Residues 214–271 (ADYRVKRMTSFLNPWEHARDSGYQLTQALISFGRGEVSGVGLGNGLQKLFYLPEAHTD) lie on the Periplasmic side of the membrane. The chain crosses the membrane as a helical span at residues 272–292 (FLFSVLGEELGLVGVTLVIAL). Residues 293-315 (FTTLVVRGFSIGEQAEAAGERFS) lie on the Cytoplasmic side of the membrane. A helical membrane pass occupies residues 316 to 336 (ALVAYGLVIWFGFQAFVNMGV). Residues 337 to 348 (NMGILPTKGLTL) are Periplasmic-facing. The helical transmembrane segment at 349–369 (PLMSYGGGSMIVMCGAMAVLF) threads the bilayer. The Cytoplasmic portion of the chain corresponds to 370-388 (RIHYEVTELHKSNIKGKSR).

It belongs to the SEDS family. FtsW subfamily.

Its subcellular location is the cell inner membrane. It catalyses the reaction [GlcNAc-(1-&gt;4)-Mur2Ac(oyl-L-Ala-gamma-D-Glu-L-Lys-D-Ala-D-Ala)](n)-di-trans,octa-cis-undecaprenyl diphosphate + beta-D-GlcNAc-(1-&gt;4)-Mur2Ac(oyl-L-Ala-gamma-D-Glu-L-Lys-D-Ala-D-Ala)-di-trans,octa-cis-undecaprenyl diphosphate = [GlcNAc-(1-&gt;4)-Mur2Ac(oyl-L-Ala-gamma-D-Glu-L-Lys-D-Ala-D-Ala)](n+1)-di-trans,octa-cis-undecaprenyl diphosphate + di-trans,octa-cis-undecaprenyl diphosphate + H(+). Its pathway is cell wall biogenesis; peptidoglycan biosynthesis. Functionally, peptidoglycan polymerase that is essential for cell division. This is Probable peptidoglycan glycosyltransferase FtsW from Methylomonas methanica (strain DSM 25384 / MC09).